Reading from the N-terminus, the 360-residue chain is Photosystem II protein D1 2 (360 aa).

Residues M1 to G31 lie on the Cytoplasmic side of the membrane. A helical transmembrane segment spans residues W32–I53. At A54 to G110 the chain is on the lumenal, thylakoid side. Residues P111–S134 form a helical membrane-spanning segment. H118 is a binding site for chlorophyll a. Y126 provides a ligand contact to pheophytin a. Residues Y135–W142 lie on the Cytoplasmic side of the membrane. Residues I143–Y161 form a helical membrane-spanning segment. Y147 is a binding site for pheophytin a. Topologically, residues P162–N191 are lumenal, thylakoid. [CaMn4O5] cluster contacts are provided by D170 and E189. Residues I192–L218 form a helical membrane-spanning segment. Residue H198 participates in chlorophyll a binding. The a quinone site is built by H215, S264, and F265. Position 215 (H215) interacts with Fe cation. The Cytoplasmic segment spans residues V219–S270. Residues L271–F295 traverse the membrane as a helical segment. H272 contributes to the Fe cation binding site. The Lumenal, thylakoid segment spans residues N296–G360. H332, E333, H337, D342, and A344 together coordinate [CaMn4O5] cluster. Positions S345–G360 are excised as a propeptide.

This sequence belongs to the reaction center PufL/M/PsbA/D family. In terms of assembly, PSII is composed of 1 copy each of membrane proteins PsbA, PsbB, PsbC, PsbD, PsbE, PsbF, PsbH, PsbI, PsbJ, PsbK, PsbL, PsbM, PsbT, PsbX, PsbY, PsbZ, Psb30/Ycf12, peripheral proteins PsbO, CyanoQ (PsbQ), PsbU, PsbV and a large number of cofactors. It forms dimeric complexes. Requires The D1/D2 heterodimer binds P680, chlorophylls that are the primary electron donor of PSII, and subsequent electron acceptors. It shares a non-heme iron and each subunit binds pheophytin, quinone, additional chlorophylls, carotenoids and lipids. D1 provides most of the ligands for the Mn4-Ca-O5 cluster of the oxygen-evolving complex (OEC). There is also a Cl(-1) ion associated with D1 and D2, which is required for oxygen evolution. The PSII complex binds additional chlorophylls, carotenoids and specific lipids. as cofactor. C-terminally processed by CtpA; processing is essential to allow assembly of the oxygen-evolving complex and photosynthetic growth. Post-translationally, tyr-161 forms a radical intermediate that is referred to as redox-active TyrZ, YZ or Y-Z.

The protein localises to the cellular thylakoid membrane. The catalysed reaction is 2 a plastoquinone + 4 hnu + 2 H2O = 2 a plastoquinol + O2. Its function is as follows. Photosystem II (PSII) is a light-driven water:plastoquinone oxidoreductase that uses light energy to abstract electrons from H(2)O, generating O(2) and a proton gradient subsequently used for ATP formation. It consists of a core antenna complex that captures photons, and an electron transfer chain that converts photonic excitation into a charge separation. The D1/D2 (PsbA/PsbD) reaction center heterodimer binds P680, the primary electron donor of PSII as well as several subsequent electron acceptors. The polypeptide is Photosystem II protein D1 2 (Synechocystis sp. (strain ATCC 27184 / PCC 6803 / Kazusa)).